The sequence spans 718 residues: Centromere/kinetochore protein zw10 (718 aa).

This sequence belongs to the ZW10 family.

The protein localises to the cytoplasm. It is found in the nucleus. It localises to the chromosome. The protein resides in the centromere. Its subcellular location is the kinetochore. In terms of biological role, required for accurate chromosome segregation. The protein is Centromere/kinetochore protein zw10 (mit(1)15) of Drosophila pseudoobscura pseudoobscura (Fruit fly).